The sequence spans 752 residues: ATP-dependent RNA helicase DRS1 (752 aa).

Disordered stretches follow at residues 1 to 61 and 119 to 223; these read MVVG…NLDE and GLVK…TEGD. Acidic residues predominate over residues 19 to 34; the sequence is DSEDDVPILDSSDDEK. Residues 40-51 are compositionally biased toward basic residues; the sequence is TTKKRKGKNNKK. Over residues 124-142 the composition is skewed to basic and acidic residues; that stretch reads AHIDSKQEEETEKEKVEKE. Composition is skewed to acidic residues over residues 167 to 191 and 200 to 209; these read NQSE…QEEM and DEIDEEDDSE. Phosphoserine is present on serine 208. The Q motif signature appears at 231 to 259; it reads ENFNSLSLSRPVLKGLASLGYVKPSPIQS. A Helicase ATP-binding domain is found at 262–437; that stretch reads IPIALLGKDI…SLSLKKPVRI (176 aa). ATP is bound at residue 275–282; that stretch reads AVTGSGKT. The short motif at 385–388 is the DEAD box element; the sequence is DEAD. Residues 448–639 enclose the Helicase C-terminal domain; it reads KLTQEFVRIR…SMNDTIEDIL (192 aa). Residues 621–667 are a coiled coil; sequence IEETNKLVESMNDTIEDILVEEKEEKEILRAEMQLRKGENMLKHKKE. The disordered stretch occupies residues 673 to 752; it reads RRTWFQSESD…NKKKGFKSRR (80 aa). Residues 694–705 are compositionally biased toward basic residues; it reads RNKKVTNSKKRK. The span at 722–734 shows a compositional bias: basic and acidic residues; the sequence is TKTDRIADQERTF. Basic residues predominate over residues 735-752; sequence KKQKSTNSNKKKGFKSRR.

It belongs to the DEAD box helicase family. DDX27/DRS1 subfamily. As to quaternary structure, interacts with RRP1 and associates with pre-ribosomal particles.

Its subcellular location is the nucleus. The protein resides in the nucleolus. The catalysed reaction is ATP + H2O = ADP + phosphate + H(+). Its function is as follows. ATP-binding RNA helicase involved in ribosome assembly. The polypeptide is ATP-dependent RNA helicase DRS1 (DRS1) (Saccharomyces cerevisiae (strain ATCC 204508 / S288c) (Baker's yeast)).